The following is a 490-amino-acid chain: Cytochrome P450 2C19 (490 aa).

A heme-binding site is contributed by C435.

The protein belongs to the cytochrome P450 family. The cofactor is heme.

Its subcellular location is the endoplasmic reticulum membrane. The protein resides in the microsome membrane. It carries out the reaction an organic molecule + reduced [NADPH--hemoprotein reductase] + O2 = an alcohol + oxidized [NADPH--hemoprotein reductase] + H2O + H(+). The enzyme catalyses (5Z,8Z,11Z)-eicosatrienoate + reduced [NADPH--hemoprotein reductase] + O2 = 19-hydroxy-(5Z,8Z,11Z)-eicosatrienoate + oxidized [NADPH--hemoprotein reductase] + H2O + H(+). The catalysed reaction is (5Z,8Z,11Z,14Z)-eicosatetraenoate + reduced [NADPH--hemoprotein reductase] + O2 = 19-hydroxy-(5Z,8Z,11Z,14Z)-eicosatetraenoate + oxidized [NADPH--hemoprotein reductase] + H2O + H(+). It catalyses the reaction (5Z,8Z,11Z,14Z,17Z)-eicosapentaenoate + reduced [NADPH--hemoprotein reductase] + O2 = 19-hydroxy-(5Z,8Z,11Z,14Z,17Z)-eicosapentaenoate + oxidized [NADPH--hemoprotein reductase] + H2O + H(+). It carries out the reaction (4Z,7Z,10Z,13Z,16Z,19Z)-docosahexaenoate + reduced [NADPH--hemoprotein reductase] + O2 = 21-hydroxy-(4Z,7Z,10Z,13Z,16Z,19Z)-docosahexaenoate + oxidized [NADPH--hemoprotein reductase] + H2O + H(+). The enzyme catalyses (5Z,8Z,11Z,14Z)-eicosatetraenoate + reduced [NADPH--hemoprotein reductase] + O2 = (8R,9S)-epoxy-(5Z,11Z,14Z)-eicosatrienoate + oxidized [NADPH--hemoprotein reductase] + H2O + H(+). The catalysed reaction is (5Z,8Z,11Z,14Z)-eicosatetraenoate + reduced [NADPH--hemoprotein reductase] + O2 = (11R,12S)-epoxy-(5Z,8Z,14Z)-eicosatrienoate + oxidized [NADPH--hemoprotein reductase] + H2O + H(+). It catalyses the reaction (5Z,8Z,11Z,14Z)-eicosatetraenoate + reduced [NADPH--hemoprotein reductase] + O2 = (11S,12R)-epoxy-(5Z,8Z,14Z)-eicosatrienoate + oxidized [NADPH--hemoprotein reductase] + H2O + H(+). It carries out the reaction (5Z,8Z,11Z,14Z)-eicosatetraenoate + reduced [NADPH--hemoprotein reductase] + O2 = (14R,15S)-epoxy-(5Z,8Z,11Z)-eicosatrienoate + oxidized [NADPH--hemoprotein reductase] + H2O + H(+). The enzyme catalyses (5Z,8Z,11Z,14Z,17Z)-eicosapentaenoate + reduced [NADPH--hemoprotein reductase] + O2 = (17R,18S)-epoxy-(5Z,8Z,11Z,14Z)-eicosatetraenoate + oxidized [NADPH--hemoprotein reductase] + H2O + H(+). The catalysed reaction is (4Z,7Z,10Z,13Z,16Z,19Z)-docosahexaenoate + reduced [NADPH--hemoprotein reductase] + O2 = (19R,20S)-epoxy-(4Z,7Z,10Z,13Z,16Z)-docosapentaenoate + oxidized [NADPH--hemoprotein reductase] + H2O + H(+). It catalyses the reaction (4Z,7Z,10Z,13Z,16Z,19Z)-docosahexaenoate + reduced [NADPH--hemoprotein reductase] + O2 = (19S,20R)-epoxy-(4Z,7Z,10Z,13Z,16Z)-docosapentaenoate + oxidized [NADPH--hemoprotein reductase] + H2O + H(+). It carries out the reaction (4R)-limonene + reduced [NADPH--hemoprotein reductase] + O2 = (1R,5S)-carveol + oxidized [NADPH--hemoprotein reductase] + H2O + H(+). The enzyme catalyses (4S)-limonene + reduced [NADPH--hemoprotein reductase] + O2 = (1S,5R)-carveol + oxidized [NADPH--hemoprotein reductase] + H2O + H(+). The catalysed reaction is (4S)-limonene + reduced [NADPH--hemoprotein reductase] + O2 = (4S)-perillyl alcohol + oxidized [NADPH--hemoprotein reductase] + H2O + H(+). It catalyses the reaction fenbendazole + reduced [NADPH--hemoprotein reductase] + O2 = 4'-hydroxyfenbendazole + oxidized [NADPH--hemoprotein reductase] + H2O + H(+). Its pathway is lipid metabolism; fatty acid metabolism. The protein operates within terpene metabolism; (4R)-limonene degradation. Functionally, a cytochrome P450 monooxygenase involved in the metabolism of polyunsaturated fatty acids (PUFA). Mechanistically, uses molecular oxygen inserting one oxygen atom into a substrate, and reducing the second into a water molecule, with two electrons provided by NADPH via cytochrome P450 reductase (NADPH--hemoprotein reductase). Catalyzes the hydroxylation of carbon-hydrogen bonds. Hydroxylates PUFA specifically at the omega-1 position. Catalyzes the epoxidation of double bonds of PUFA. Also metabolizes plant monoterpenes such as limonene. Oxygenates (R)- and (S)-limonene to produce carveol and perillyl alcohol. Responsible for the metabolism of a number of therapeutic agents such as the anticonvulsant drug S-mephenytoin, omeprazole, proguanil, certain barbiturates, diazepam, propranolol, citalopram and imipramine. Hydroxylates fenbendazole at the 4' position. In Homo sapiens (Human), this protein is Cytochrome P450 2C19 (CYP2C19).